We begin with the raw amino-acid sequence, 365 residues long: Sulfate/thiosulfate import ATP-binding protein CysA (365 aa).

An ABC transporter domain is found at 3–237 (IEIANIKKSF…PATRFVLEFM (235 aa)). 35–42 (GPSGSGKT) is an ATP binding site.

The protein belongs to the ABC transporter superfamily. Sulfate/tungstate importer (TC 3.A.1.6) family. In terms of assembly, the complex is composed of two ATP-binding proteins (CysA), two transmembrane proteins (CysT and CysW) and a solute-binding protein (CysP).

Its subcellular location is the cell inner membrane. It catalyses the reaction sulfate(out) + ATP + H2O = sulfate(in) + ADP + phosphate + H(+). The catalysed reaction is thiosulfate(out) + ATP + H2O = thiosulfate(in) + ADP + phosphate + H(+). Its function is as follows. Part of the ABC transporter complex CysAWTP involved in sulfate/thiosulfate import. Responsible for energy coupling to the transport system. The sequence is that of Sulfate/thiosulfate import ATP-binding protein CysA from Escherichia coli O6:H1 (strain CFT073 / ATCC 700928 / UPEC).